The chain runs to 418 residues: Metacaspase-2 (418 aa).

The interval 68 to 113 (PSPYTHAPHAPSPFNHAPPDSYPFTHAPPASSPFNHAPPGPPPPVH) is disordered. Positions 70–80 (PYTHAPHAPSP) are enriched in low complexity. Residues 103 to 112 (HAPPGPPPPV) show a composition bias toward pro residues. Residues His-200 and Cys-256 contribute to the active site. The tract at residues 385–406 (PDEEEEVNQAPQKTQEPQLSAN) is disordered. Over residues 393-405 (QAPQKTQEPQLSA) the composition is skewed to polar residues.

It belongs to the peptidase C14B family.

Acts as a negative regulator of oxidative stress cell death and hypersensitive cell death response mediated by immune response. Acts via indirect or direct regulation of AMC1 at postranscriptional level. The protein is Metacaspase-2 (AMC2) of Arabidopsis thaliana (Mouse-ear cress).